The chain runs to 485 residues: D-alanine--D-alanyl carrier protein ligase (485 aa).

Residue 144–145 (TS) participates in ATP binding. D189 contributes to the D-alanine binding site. 284-289 (NTYGPT) contacts ATP. A D-alanine-binding site is contributed by V293. ATP contacts are provided by D365 and K473. K473 is a D-alanine binding site.

Belongs to the ATP-dependent AMP-binding enzyme family. DltA subfamily.

The protein resides in the cytoplasm. The enzyme catalyses holo-[D-alanyl-carrier protein] + D-alanine + ATP = D-alanyl-[D-alanyl-carrier protein] + AMP + diphosphate. Its pathway is cell wall biogenesis; lipoteichoic acid biosynthesis. Its function is as follows. Catalyzes the first step in the D-alanylation of lipoteichoic acid (LTA), the activation of D-alanine and its transfer onto the D-alanyl carrier protein (Dcp) DltC. In an ATP-dependent two-step reaction, forms a high energy D-alanyl-AMP intermediate, followed by transfer of the D-alanyl residue as a thiol ester to the phosphopantheinyl prosthetic group of the Dcp. D-alanylation of LTA plays an important role in modulating the properties of the cell wall in Gram-positive bacteria, influencing the net charge of the cell wall. The protein is D-alanine--D-alanyl carrier protein ligase of Staphylococcus aureus (strain Mu3 / ATCC 700698).